The chain runs to 380 residues: Heme A synthase (380 aa).

Transmembrane regions (helical) follow at residues 36-56, 125-145, 151-171, 187-207, 227-247, 287-307, 320-340, and 344-364; these read IRAWLAVLFALVVAMIVVGGL, VIGLVWALGFFGFLLARKIPA, LILPGVLGGVQGAVGAWMVAS, LATHLGLAFVILGLLAWSILQ, FGLATGWLHLAFLQILIGALV, LVQFIHRIVGYLLLAYGVMVW, FAFNAGFAALSLQVVLGIVTV, and APWQIAILHQLLAVGVFVLIL. Heme is bound at residue His292. His352 is a heme binding site.

Belongs to the COX15/CtaA family. Type 2 subfamily. As to quaternary structure, interacts with CtaB. It depends on heme b as a cofactor.

It is found in the cell membrane. The enzyme catalyses Fe(II)-heme o + 2 A + H2O = Fe(II)-heme a + 2 AH2. The protein operates within porphyrin-containing compound metabolism; heme A biosynthesis; heme A from heme O: step 1/1. Its function is as follows. Catalyzes the conversion of heme O to heme A by two successive hydroxylations of the methyl group at C8. The first hydroxylation forms heme I, the second hydroxylation results in an unstable dihydroxymethyl group, which spontaneously dehydrates, resulting in the formyl group of heme A. In Ruegeria pomeroyi (strain ATCC 700808 / DSM 15171 / DSS-3) (Silicibacter pomeroyi), this protein is Heme A synthase.